We begin with the raw amino-acid sequence, 110 residues long: UPF0122 protein lwe1821 (110 aa).

The protein belongs to the UPF0122 family.

Functionally, might take part in the signal recognition particle (SRP) pathway. This is inferred from the conservation of its genetic proximity to ftsY/ffh. May be a regulatory protein. This is UPF0122 protein lwe1821 from Listeria welshimeri serovar 6b (strain ATCC 35897 / DSM 20650 / CCUG 15529 / CIP 8149 / NCTC 11857 / SLCC 5334 / V8).